The primary structure comprises 338 residues: Ketol-acid reductoisomerase (NADP(+)) (338 aa).

The 181-residue stretch at 1 to 181 (MQVYYDKDCD…GGGRTGIIET (181 aa)) folds into the KARI N-terminal Rossmann domain. NADP(+) contacts are provided by residues 24–27 (YGSQ), Arg-47, Ser-50, Ser-52, and 82–85 (DEFQ). The active site involves His-107. NADP(+) is bound at residue Gly-133. The KARI C-terminal knotted domain occupies 182-327 (TFKDETETDL…EKLRAMMPWI (146 aa)). Mg(2+)-binding residues include Asp-190, Glu-194, Glu-226, and Glu-230. Ser-251 provides a ligand contact to substrate.

Belongs to the ketol-acid reductoisomerase family. It depends on Mg(2+) as a cofactor.

It carries out the reaction (2R)-2,3-dihydroxy-3-methylbutanoate + NADP(+) = (2S)-2-acetolactate + NADPH + H(+). The enzyme catalyses (2R,3R)-2,3-dihydroxy-3-methylpentanoate + NADP(+) = (S)-2-ethyl-2-hydroxy-3-oxobutanoate + NADPH + H(+). It participates in amino-acid biosynthesis; L-isoleucine biosynthesis; L-isoleucine from 2-oxobutanoate: step 2/4. The protein operates within amino-acid biosynthesis; L-valine biosynthesis; L-valine from pyruvate: step 2/4. In terms of biological role, involved in the biosynthesis of branched-chain amino acids (BCAA). Catalyzes an alkyl-migration followed by a ketol-acid reduction of (S)-2-acetolactate (S2AL) to yield (R)-2,3-dihydroxy-isovalerate. In the isomerase reaction, S2AL is rearranged via a Mg-dependent methyl migration to produce 3-hydroxy-3-methyl-2-ketobutyrate (HMKB). In the reductase reaction, this 2-ketoacid undergoes a metal-dependent reduction by NADPH to yield (R)-2,3-dihydroxy-isovalerate. This chain is Ketol-acid reductoisomerase (NADP(+)), found in Teredinibacter turnerae (strain ATCC 39867 / T7901).